The primary structure comprises 653 residues: MQPWEYVYDLLMPAGTPIGEKQFTKYIYLTLAVPATKEFEEKISKGDTKDLELPVYPVAFNTKPAEFKGDRIATKKDLLTRSGLYDDDYDFEAPIKDLEFKSALVPGYFPLAVLKLYFEGDIDAHPEDYGLKPIDGHKWYSSVNGSYKVTNGLLFNVDETKNSDHYSVLFLDENPKEFNTLNGYGVVRFYMDLKNAPPEVYTKAKEECISAGGLYYYDAREETAYCRLPLNKEANIKASEFIHQLYEMIKSKITSEDFLKNEMVYQLPGPKVIPVKPVIGKTFEEMVKTADKYLLLGETAKEETKQETKQETGKEEEEKKETKQESQEQLFNPFAIVDEMLAEGQPAEAKQENSPQQQNPPAEAKQRQQQEENNAEAPQQRQQEENTPLKMNILTEEESNKSEEGQQPLENNIQTFGFKGDIADFFASLVKDKYIFLPILSRRSPSEYKNAKKQRTFKGEAVEEHTEIPRENMKYAEFRKKYSEIVNKYAVPFMHDGIWAILPGKEQELYKELDKLVQEAQKLGISPEEIEFMVTVLLVPKDAVVREINRQIKEIRTDIDEVKQELQNPDLKKTKIASLKKQLEQKQLRLNLLKDLYSTVTKEEIDKLAGKVKDTLYTLNQIAKYAGQQEETDETTEEEEEEEEEGNDTVKLS.

Residues Ala300 to Leu330 adopt a coiled-coil conformation. The span at Glu302 to Ser326 shows a compositional bias: basic and acidic residues. Disordered regions lie at residues Glu302–Gln329, Gly344–Pro388, and Ala626–Ser653. The segment covering Glu371–Arg381 has biased composition (low complexity). The stretch at Lys505–Thr649 forms a coiled coil. Residues Glu630–Asn647 are compositionally biased toward acidic residues.

It is found in the virion. The polypeptide is Structural protein ORF653 (Acidianus two-tailed virus (ATV)).